The sequence spans 224 residues: MKIYGIYMDRPLSQEETDRLMSFVSAEKREKCRRFYHKEDAHRTLLGDVLVRSVISEQYQLNKADIRFSAQEYGKPCIPDLPNAHFNISHSGHWVIGAFDSDPIGVDIEKMKPISLGIAERFFSKNEYSDLLSKHKDEQNDYFYHLWSMKESFIKQEGKGLSLPLDSFSVRLHEDGRVSVELPEHHTPCFIKTYEVDPGYKMAVCAARPDFPEDITMISYEALL.

Mg(2+)-binding residues include D107, E109, and E151. The segment at 158 to 189 is peptidyl carrier protein binding; the sequence is GKGLSLPLDSFSVRLHEDGRVSVELPEHHTPC.

This sequence belongs to the P-Pant transferase superfamily. Gsp/Sfp/HetI/AcpT family. Mg(2+) serves as cofactor.

The enzyme catalyses apo-[peptidyl-carrier protein] + CoA = holo-[peptidyl-carrier protein] + adenosine 3',5'-bisphosphate + H(+). Its function is as follows. May activate the peptidyl carrier protein (PCP) domains of fengycin synthase by transferring the 4'-phosphopantetheinyl moiety of coenzyme A (CoA) to a serine residue. The polypeptide is 4'-phosphopantetheinyl transferase ffp (ffp) (Bacillus subtilis).